We begin with the raw amino-acid sequence, 369 residues long: Glutamate 5-kinase (369 aa).

Lys9 provides a ligand contact to ATP. Ser49, Asp136, and Asn148 together coordinate substrate. Residues 168-169 (TD) and 210-216 (TGGMLTK) contribute to the ATP site. A PUA domain is found at 275–355 (QGSIWVDKGA…KGVLIYRDDW (81 aa)).

It belongs to the glutamate 5-kinase family.

The protein resides in the cytoplasm. It catalyses the reaction L-glutamate + ATP = L-glutamyl 5-phosphate + ADP. It participates in amino-acid biosynthesis; L-proline biosynthesis; L-glutamate 5-semialdehyde from L-glutamate: step 1/2. Its function is as follows. Catalyzes the transfer of a phosphate group to glutamate to form L-glutamate 5-phosphate. In Streptococcus pneumoniae (strain 70585), this protein is Glutamate 5-kinase.